The primary structure comprises 111 residues: Large ribosomal subunit protein eL34B (111 aa).

Tyrosine 76 is subject to Phosphotyrosine.

Belongs to the eukaryotic ribosomal protein eL34 family. Component of the large ribosomal subunit (LSU). Mature yeast ribosomes consist of a small (40S) and a large (60S) subunit. The 40S small subunit contains 1 molecule of ribosomal RNA (18S rRNA) and at least 33 different proteins. The large 60S subunit contains 3 rRNA molecules (25S, 5.8S and 5S rRNA) and at least 46 different proteins.

Its subcellular location is the cytoplasm. The protein resides in the nucleus. The protein localises to the nucleolus. In terms of biological role, component of the ribosome, a large ribonucleoprotein complex responsible for the synthesis of proteins in the cell. The small ribosomal subunit (SSU) binds messenger RNAs (mRNAs) and translates the encoded message by selecting cognate aminoacyl-transfer RNA (tRNA) molecules. The large subunit (LSU) contains the ribosomal catalytic site termed the peptidyl transferase center (PTC), which catalyzes the formation of peptide bonds, thereby polymerizing the amino acids delivered by tRNAs into a polypeptide chain. The nascent polypeptides leave the ribosome through a tunnel in the LSU and interact with protein factors that function in enzymatic processing, targeting, and the membrane insertion of nascent chains at the exit of the ribosomal tunnel. In Schizosaccharomyces pombe (strain 972 / ATCC 24843) (Fission yeast), this protein is Large ribosomal subunit protein eL34B (rpl3402).